A 488-amino-acid polypeptide reads, in one-letter code: Catalase (488 aa).

Residues 1–26 (MTDRKNLTTNQGVPVGDNQNSMTAGR) are disordered. Over residues 7-23 (LTTNQGVPVGDNQNSMT) the composition is skewed to polar residues. Catalysis depends on residues His-55 and Asn-128. Tyr-338 contributes to the heme binding site.

It belongs to the catalase family. Requires heme as cofactor.

Its subcellular location is the cytoplasm. It carries out the reaction 2 H2O2 = O2 + 2 H2O. In terms of biological role, decomposes hydrogen peroxide into water and oxygen; serves to protect cells from the toxic effects of hydrogen peroxide. The chain is Catalase (kat) from Listeria monocytogenes serovar 1/2a (strain ATCC BAA-679 / EGD-e).